A 79-amino-acid chain; its full sequence is Acyl carrier protein (79 aa).

Positions 1–79 (MTKEQILVDV…DVVSYIETQV (79 aa)) constitute a Carrier domain. An O-(pantetheine 4'-phosphoryl)serine modification is found at Ser-39.

The protein belongs to the acyl carrier protein (ACP) family. In terms of processing, 4'-phosphopantetheine is transferred from CoA to a specific serine of apo-ACP by AcpS. This modification is essential for activity because fatty acids are bound in thioester linkage to the sulfhydryl of the prosthetic group.

It localises to the cytoplasm. Its pathway is lipid metabolism; fatty acid biosynthesis. In terms of biological role, carrier of the growing fatty acid chain in fatty acid biosynthesis. In Exiguobacterium sibiricum (strain DSM 17290 / CCUG 55495 / CIP 109462 / JCM 13490 / 255-15), this protein is Acyl carrier protein.